The chain runs to 72 residues: Translation initiation factor IF-1 (72 aa).

The region spanning 1–72 (MSKSDYIELE…TKGRIIFRHK (72 aa)) is the S1-like domain.

It belongs to the IF-1 family. In terms of assembly, component of the 30S ribosomal translation pre-initiation complex which assembles on the 30S ribosome in the order IF-2 and IF-3, IF-1 and N-formylmethionyl-tRNA(fMet); mRNA recruitment can occur at any time during PIC assembly.

The protein resides in the cytoplasm. In terms of biological role, one of the essential components for the initiation of protein synthesis. Stabilizes the binding of IF-2 and IF-3 on the 30S subunit to which N-formylmethionyl-tRNA(fMet) subsequently binds. Helps modulate mRNA selection, yielding the 30S pre-initiation complex (PIC). Upon addition of the 50S ribosomal subunit IF-1, IF-2 and IF-3 are released leaving the mature 70S translation initiation complex. This Ruthia magnifica subsp. Calyptogena magnifica protein is Translation initiation factor IF-1.